The chain runs to 342 residues: Protein-glutamate methylesterase/protein-glutamine glutaminase 1 (342 aa).

In terms of domain architecture, Response regulatory spans 2–119 (RVAIVNDMPL…GDPKAAAQRL (118 aa)). Position 53 is a 4-aspartylphosphate (Asp-53). Residues 146-329 (SDTDAALVVI…LPLGDIAPRL (184 aa)) enclose the CheB-type methylesterase domain. Catalysis depends on residues Ser-158, His-185, and Asp-278.

It belongs to the CheB family. In terms of processing, phosphorylated by CheA. Phosphorylation of the N-terminal regulatory domain activates the methylesterase activity.

It is found in the cytoplasm. The enzyme catalyses [protein]-L-glutamate 5-O-methyl ester + H2O = L-glutamyl-[protein] + methanol + H(+). It catalyses the reaction L-glutaminyl-[protein] + H2O = L-glutamyl-[protein] + NH4(+). Its function is as follows. Involved in chemotaxis. Part of a chemotaxis signal transduction system that modulates chemotaxis in response to various stimuli. Catalyzes the demethylation of specific methylglutamate residues introduced into the chemoreceptors (methyl-accepting chemotaxis proteins or MCP) by CheR. Also mediates the irreversible deamidation of specific glutamine residues to glutamic acid. The chain is Protein-glutamate methylesterase/protein-glutamine glutaminase 1 from Bordetella avium (strain 197N).